Consider the following 161-residue polypeptide: Bacterioferritin (161 aa).

The Ferritin-like diiron domain occupies Met-1–Gly-145. Residues Glu-18 and Glu-51 each contribute to the Fe cation site. Residue Met-52 participates in heme b binding. 4 residues coordinate Fe cation: His-54, Glu-94, Glu-127, and His-130.

This sequence belongs to the bacterioferritin family. Homooligomer of 24 subunits, arranged as 12 dimers, that are packed together to form an approximately spherical molecule with a central cavity, in which large amounts of iron can be deposited. It depends on heme b as a cofactor.

It catalyses the reaction 4 Fe(2+) + O2 + 4 H(+) = 4 Fe(3+) + 2 H2O. The enzyme catalyses Fe(2+)(in) = Fe(2+)(out). Iron-storage protein, whose ferroxidase center binds Fe(2+), oxidizes it using dioxygen to Fe(3+), and participates in the subsequent Fe(3+) oxide mineral core formation within the central cavity of the BFR protein shell. The polypeptide is Bacterioferritin (bfr) (Rhodobacter capsulatus (Rhodopseudomonas capsulata)).